Reading from the N-terminus, the 537-residue chain is Putative cysteine ligase BshC (537 aa).

The stretch at 422 to 450 (IEKVEGMIEQQRRLYQDLLDEVAGNQNNI) forms a coiled coil.

The protein belongs to the BshC family.

Functionally, involved in bacillithiol (BSH) biosynthesis. May catalyze the last step of the pathway, the addition of cysteine to glucosamine malate (GlcN-Mal) to generate BSH. In Staphylococcus aureus (strain MRSA252), this protein is Putative cysteine ligase BshC.